The primary structure comprises 347 residues: (RS)-norcoclaurine 6-O-methyltransferase (347 aa).

Residues G192, D215, D235, M236, and K249 each contribute to the S-adenosyl-L-methionine site. Residue H253 is the Proton acceptor of the active site.

It belongs to the class I-like SAM-binding methyltransferase superfamily. Cation-independent O-methyltransferase family. COMT subfamily. In terms of assembly, homodimer.

The enzyme catalyses norcoclaurine + S-adenosyl-L-methionine = coclaurine + S-adenosyl-L-homocysteine + H(+). It participates in alkaloid biosynthesis; (S)-reticuline biosynthesis; (S)-reticuline from (S)-norcoclaurine: step 1/4. Catalyzes the transfer of the S-methyl group of S-adenosyl-L-methionine (AdoMet) to the 6-hydroxyl group of norcoclaurine to form coclaurine. In Coptis japonica (Japanese goldthread), this protein is (RS)-norcoclaurine 6-O-methyltransferase.